Consider the following 104-residue polypeptide: Small ribosomal subunit protein bS6c (104 aa).

It belongs to the bacterial ribosomal protein bS6 family.

It is found in the plastid. It localises to the cyanelle. In terms of biological role, binds together with bS18 to 16S ribosomal RNA. The protein is Small ribosomal subunit protein bS6c (rps6) of Cyanophora paradoxa.